The chain runs to 201 residues: Troponin I (201 aa).

Position 1 is an N-acetylalanine (alanine 1). The span at 1-33 (ADKAKAAEEAKKKQDDIDRKKAEVRKRLEEQSL) shows a compositional bias: basic and acidic residues. The disordered stretch occupies residues 1–45 (ADKAKAAEEAKKKQDDIDRKKAEVRKRLEEQSLKKQKKGFMTPER). Residues 108–117 (IESDKYDVEL) form a troponin T-interaction region. The segment at 135–148 (DLRGKFIKPTLKKV) is actin-binding. Residues lysine 142 and lysine 146 each carry the N6,N6,N6-trimethyllysine modification. The interval 182–201 (EDDKGATEGDGPAAEEVAAE) is disordered.

It belongs to the troponin I family.

Troponin I is the actomyosin ATPase inhibitory subunit present in the thin filament regulatory complex. This chain is Troponin I, found in Astacus leptodactylus (Turkish narrow-clawed crayfish).